The primary structure comprises 257 residues: Membrane protein insertase YidC 1 (257 aa).

Residues 1-20 (MYRKFGMAAMLVSILLLMTG) form the signal peptide. Cysteine 21 carries the N-palmitoyl cysteine lipid modification. The S-diacylglycerol cysteine moiety is linked to residue cysteine 21. The next 5 helical transmembrane spans lie at 35–55 (IWDS…ANAF), 59–79 (FGLA…PLMI), 129–149 (LAGC…YHAI), 160–180 (FLWF…AGIT), and 205–225 (VMIL…WVIG).

The protein belongs to the OXA1/ALB3/YidC family. Type 2 subfamily.

It is found in the cell membrane. In terms of biological role, required for the insertion and/or proper folding and/or complex formation of integral membrane proteins into the membrane. Involved in integration of membrane proteins that insert both dependently and independently of the Sec translocase complex, as well as at least some lipoproteins. This Halalkalibacterium halodurans (strain ATCC BAA-125 / DSM 18197 / FERM 7344 / JCM 9153 / C-125) (Bacillus halodurans) protein is Membrane protein insertase YidC 1.